The following is an 889-amino-acid chain: Cytoplasmic aconitate hydratase (889 aa).

Residues glutamine 86 and 205–207 contribute to the substrate site; that span reads DSH. [4Fe-4S] cluster is bound by residues cysteine 437, cysteine 503, and cysteine 506. Residues arginine 536, arginine 541, arginine 699, and 779–780 contribute to the substrate site; that span reads SR.

The protein belongs to the aconitase/IPM isomerase family. In terms of assembly, interacts (when associated with the 4Fe-4S) with FBXL5. Interacts with frataxin(81-210). The cofactor is [4Fe-4S] cluster.

It is found in the cytoplasm. It localises to the cytosol. It carries out the reaction citrate = D-threo-isocitrate. Its function is as follows. Bifunctional iron sensor that switches between 2 activities depending on iron availability. Iron deprivation, promotes its mRNA binding activity through which it regulates the expression of genes involved in iron uptake, sequestration and utilization. Binds to iron-responsive elements (IRES) in the untranslated region of target mRNAs preventing for instance the translation of ferritin and aminolevulinic acid synthase and stabilizing the transferrin receptor mRNA. Functionally, conversely, when cellular iron levels are high, binds a 4Fe-4S cluster which precludes RNA binding activity and promotes the aconitase activity, the isomerization of citrate to isocitrate via cis-aconitate. The protein is Cytoplasmic aconitate hydratase (Aco1) of Rattus norvegicus (Rat).